The chain runs to 343 residues: Heat-inducible transcription repressor HrcA (343 aa).

The protein belongs to the HrcA family.

Negative regulator of class I heat shock genes (grpE-dnaK-dnaJ and groELS operons). Prevents heat-shock induction of these operons. The polypeptide is Heat-inducible transcription repressor HrcA (Mycolicibacterium smegmatis (strain ATCC 700084 / mc(2)155) (Mycobacterium smegmatis)).